Here is a 383-residue protein sequence, read N- to C-terminus: Teichoic acid glycerol-phosphate primase (383 aa).

Belongs to the CDP-glycerol glycerophosphotransferase family.

The protein localises to the cell membrane. It carries out the reaction N-acetyl-beta-D-mannosaminyl-(1-&gt;4)-N-acetyl-alpha-D-glucosaminyl di-trans,octa-cis-undecaprenyl diphosphate + CDP-glycerol = 4-O-[(2R)-glycerylphospho]-N-acetyl-beta-D-mannosaminyl-(1-&gt;4)-N-acetyl-alpha-D-glucosaminyl di-trans,octa-cis-undecaprenyl diphosphate + CMP + H(+). Its pathway is cell wall biogenesis; poly(ribitol phosphate) teichoic acid biosynthesis. Catalyzes the addition of a single glycerol phosphate residue to the prenoldiphosphate-linked disaccharide. The polypeptide is Teichoic acid glycerol-phosphate primase (tarB) (Bacillus spizizenii (strain ATCC 23059 / NRRL B-14472 / W23) (Bacillus subtilis subsp. spizizenii)).